We begin with the raw amino-acid sequence, 268 residues long: Protein MGF 300-1L (268 aa).

Residues 1 to 175 (MVSLTTCCLK…QTFKTFYAKN (175 aa)) are Cytoplasmic-facing. A helical membrane pass occupies residues 176–193 (YSLSTLYCIFLAIYYKLY). Residues 194–268 (TALRKMVKIY…MYAFSQNDYW (75 aa)) lie on the Extracellular side of the membrane. The N-linked (GlcNAc...) asparagine; by host glycan is linked to Asn-227.

It belongs to the asfivirus MGF 300 family.

It is found in the host membrane. Functionally, plays a role in virus cell tropism, and may be required for efficient virus replication in macrophages. The polypeptide is Protein MGF 300-1L (African swine fever virus (strain Badajoz 1971 Vero-adapted) (Ba71V)).